The sequence spans 244 residues: Flavin-dependent thymidylate synthase (244 aa).

In terms of domain architecture, ThyX spans 17–239; it reads ITVELVKHSA…PETHAAFEKQ (223 aa). FAD contacts are provided by residues Ser-68, 91–93, and Glu-99; that span reads RHR. DUMP contacts are provided by residues 88–91, 99–103, and Arg-171; these read EFMR and EESGR. The ThyX motif signature appears at 91 to 101; the sequence is RHRIASYNEES. Residues 187–189 and Asn-193 contribute to the FAD site; that span reads NAR. Arg-198 is a dUMP binding site. Residue Arg-198 is the Involved in ionization of N3 of dUMP, leading to its activation of the active site.

The protein belongs to the thymidylate synthase ThyX family. Homotetramer. The cofactor is FAD.

The enzyme catalyses dUMP + (6R)-5,10-methylene-5,6,7,8-tetrahydrofolate + NADPH + H(+) = dTMP + (6S)-5,6,7,8-tetrahydrofolate + NADP(+). It participates in pyrimidine metabolism; dTTP biosynthesis. Catalyzes the reductive methylation of 2'-deoxyuridine-5'-monophosphate (dUMP) to 2'-deoxythymidine-5'-monophosphate (dTMP) while utilizing 5,10-methylenetetrahydrofolate (mTHF) as the methyl donor, and NADPH and FADH(2) as the reductant. This Tropheryma whipplei (strain Twist) (Whipple's bacillus) protein is Flavin-dependent thymidylate synthase.